We begin with the raw amino-acid sequence, 216 residues long: Octanoyltransferase (216 aa).

The 176-residue stretch at 32-207 (SDSQDELWIV…TFSQIMGYQQ (176 aa)) folds into the BPL/LPL catalytic domain. Substrate is bound by residues 71 to 78 (RGGQVTYH), 138 to 140 (SLG), and 151 to 153 (GLA). Catalysis depends on Cys169, which acts as the Acyl-thioester intermediate.

The protein belongs to the LipB family.

Its subcellular location is the cytoplasm. It carries out the reaction octanoyl-[ACP] + L-lysyl-[protein] = N(6)-octanoyl-L-lysyl-[protein] + holo-[ACP] + H(+). It participates in protein modification; protein lipoylation via endogenous pathway; protein N(6)-(lipoyl)lysine from octanoyl-[acyl-carrier-protein]: step 1/2. Catalyzes the transfer of endogenously produced octanoic acid from octanoyl-acyl-carrier-protein onto the lipoyl domains of lipoate-dependent enzymes. Lipoyl-ACP can also act as a substrate although octanoyl-ACP is likely to be the physiological substrate. This chain is Octanoyltransferase, found in Shewanella frigidimarina (strain NCIMB 400).